The chain runs to 298 residues: tRNA(Met) cytidine acetate ligase (298 aa).

Residues 6-19 (IAEY…HIYQ), glycine 100, asparagine 157, and arginine 182 contribute to the ATP site.

Belongs to the TmcAL family.

Its subcellular location is the cytoplasm. The catalysed reaction is cytidine(34) in elongator tRNA(Met) + acetate + ATP = N(4)-acetylcytidine(34) in elongator tRNA(Met) + AMP + diphosphate. Catalyzes the formation of N(4)-acetylcytidine (ac(4)C) at the wobble position of elongator tRNA(Met), using acetate and ATP as substrates. First activates an acetate ion to form acetyladenylate (Ac-AMP) and then transfers the acetyl group to tRNA to form ac(4)C34. This Mycoplasmopsis pulmonis (strain UAB CTIP) (Mycoplasma pulmonis) protein is tRNA(Met) cytidine acetate ligase.